Consider the following 232-residue polypeptide: Succinyl-CoA:3-ketoacid coenzyme A transferase subunit A (232 aa).

A CoA-binding site is contributed by 24 to 30; the sequence is GGFGLCG.

Belongs to the 3-oxoacid CoA-transferase subunit A family. As to quaternary structure, heterodimer of a subunit A and a subunit B.

The catalysed reaction is a 3-oxo acid + succinyl-CoA = a 3-oxoacyl-CoA + succinate. This Helicobacter pylori (strain ATCC 700392 / 26695) (Campylobacter pylori) protein is Succinyl-CoA:3-ketoacid coenzyme A transferase subunit A (scoA).